A 123-amino-acid polypeptide reads, in one-letter code: Major pollen allergen Ole e 10 (123 aa).

Residues 1–21 form the signal peptide; it reads MRGTAGVPDQPVPTPTPSVPT. The disordered stretch occupies residues 1-37; the sequence is MRGTAGVPDQPVPTPTPSVPTSSSPVPKPPTQGNKKW. Cys-38 and Cys-101 are joined by a disulfide.

In terms of processing, the N-terminus is blocked. Phosphorylated at Ser-24 when expressed as a recombinant protein in a heterologous system. Post-translationally, not glycosylated. In terms of processing, contains two additional disulfide bonds. Expressed in mature and germinating pollen.

The protein resides in the cytoplasmic vesicle. In terms of biological role, carbohydrate-binding protein binding preferentially 1,3-beta-glucans. May be involved in pollen tube wall re-formation during germination. This Olea europaea (Common olive) protein is Major pollen allergen Ole e 10.